A 208-amino-acid chain; its full sequence is Methyl-CpG-binding domain protein 3-like 3 (208 aa).

Belongs to the MBD3L family.

This chain is Methyl-CpG-binding domain protein 3-like 3 (MBD3L3), found in Homo sapiens (Human).